The primary structure comprises 684 residues: Kinesin-like protein KIN-13B (684 aa).

2 disordered regions span residues 1-31 (MSGR…SNGR) and 71-103 (GNEF…SPGL). Polar residues-rich tracts occupy residues 18-31 (LSDN…SNGR) and 79-91 (TTPQ…TNQR). Residues 169–492 (KIKVVVRKRP…LRYADRVKSL (324 aa)) form the Kinesin motor domain. 258-265 (GQTGSGKT) contributes to the ATP binding site. Residues 574 to 594 (KPTIQMKSRDMPRPDMKKSNS) are disordered. Basic and acidic residues predominate over residues 580–594 (KSRDMPRPDMKKSNS). The stretch at 596-626 (DNLNALLQEEEDLVNAHRKQVEDTMNIVKEE) forms a coiled coil.

The protein belongs to the TRAFAC class myosin-kinesin ATPase superfamily. Kinesin family. KIN-13 subfamily.

Acts redundantly with KIN13A to modulate cell wall synthesis and cell expansion via the THE1 pathway. The protein is Kinesin-like protein KIN-13B of Arabidopsis thaliana (Mouse-ear cress).